A 180-amino-acid chain; its full sequence is Type-1 fimbrial protein, C chain (180 aa).

The N-terminal stretch at 1-23 (MKLKFISMAVFSALTLGVATNAS) is a signal peptide. A disulfide bridge links cysteine 44 with cysteine 84.

It belongs to the fimbrial protein family.

The protein resides in the fimbrium. Its function is as follows. Fimbriae (also called pili), polar filaments radiating from the surface of the bacterium to a length of 0.5-1.5 micrometers and numbering 100-300 per cell, enable bacteria to colonize the epithelium of specific host organs. In Escherichia coli O6:H1 (strain CFT073 / ATCC 700928 / UPEC), this protein is Type-1 fimbrial protein, C chain (pilC).